Consider the following 210-residue polypeptide: Large ribosomal subunit protein uL5 (210 aa).

A disordered region spans residues 188-210 (AKDDPKKAKTKRGPAYYAKKKKK). The span at 195-210 (AKTKRGPAYYAKKKKK) shows a compositional bias: basic residues.

The protein belongs to the universal ribosomal protein uL5 family. As to quaternary structure, part of the 50S ribosomal subunit; part of the 5S rRNA/L5/L18/L25 subcomplex. Contacts the 5S rRNA and the P site tRNA. Forms a bridge to the 30S subunit in the 70S ribosome.

This is one of the proteins that bind and probably mediate the attachment of the 5S RNA into the large ribosomal subunit, where it forms part of the central protuberance. In the 70S ribosome it contacts protein S13 of the 30S subunit (bridge B1b), connecting the 2 subunits; this bridge is implicated in subunit movement. Contacts the P site tRNA; the 5S rRNA and some of its associated proteins might help stabilize positioning of ribosome-bound tRNAs. The chain is Large ribosomal subunit protein uL5 from Cutibacterium acnes (strain DSM 16379 / KPA171202) (Propionibacterium acnes).